Here is a 976-residue protein sequence, read N- to C-terminus: Peptidylglycine alpha-amidating monooxygenase (976 aa).

A signal peptide spans 1 to 25 (MAGRARSGLLLLLLGLLALQSSCLA). The segment at 1-497 (MAGRARSGLL…EGPWEPEPSG (497 aa)) is peptidylglycine alpha-hydroxylating monooxygenase. Positions 26-35 (FRSPLSVFKR) are excised as a propeptide. At 36–866 (FKETTRSFSN…QKLSTEPGSG (831 aa)) the chain is on the intragranular side. 5 disulfide bridges follow: C47–C186, C81–C126, C114–C131, C227–C334, and C293–C315. Cu(2+) is bound by residues H107 and H108. Residues H172, H242, H244, and M314 each coordinate Cu(2+). A peptidyl-alpha-hydroxyglycine alpha-amidating lyase region spans residues 498–820 (DFHVEEELDW…LTEKMEHRSV (323 aa)). NHL repeat units follow at residues 501–544 (VEEE…NSFD), 570–611 (AEIL…LDPH), 620–665 (LGRS…FSPS), and 673–717 (GEES…FKTD). V520 is a binding site for Ca(2+). R533 provides a ligand contact to a protein. A Zn(2+)-binding site is contributed by H585. L587 serves as a coordination point for Ca(2+). C634 and C655 are oxidised to a cystine. Y654 contacts a protein. H690 is a Zn(2+) binding site. C702 and C713 are oxidised to a cystine. R706 contacts a protein. Residue N765 is glycosylated (N-linked (GlcNAc...) asparagine). The NHL 5 repeat unit spans residues 769-812 (GEIIDVFKPVRKHFDMPHDIVASEDGTVYIGDAHTNTVWKFTLT). V774 bears the Sulfotyrosine mark. Residue H786 participates in Zn(2+) binding. D787 is a binding site for Ca(2+). Residue E792 is modified to Sulfotyrosine. A helical transmembrane segment spans residues 867–890 (VSVVLITTLLVIPVLVLLAIVMFI). Residues 891–976 (RWKKSRAFGD…APLPKPAPSS (86 aa)) are Cytoplasmic-facing. S921, S932, and S945 each carry phosphoserine. The tract at residues 928 to 945 (NFFASRKGYSRKGFDRVS) is interaction with RASSF9. Residues 940 to 976 (GFDRVSTEGSDQEKDEDDGTESEEEYSAPLPKPAPSS) are disordered. Residue T946 is modified to Phosphothreonine. Position 949 is a phosphoserine (S949). The span at 952–965 (EKDEDDGTESEEEY) shows a compositional bias: acidic residues. T959 bears the Phosphothreonine mark. S961 carries the post-translational modification Phosphoserine.

It in the C-terminal section; belongs to the peptidyl-alpha-hydroxyglycine alpha-amidating lyase family. The protein in the N-terminal section; belongs to the copper type II ascorbate-dependent monooxygenase family. In terms of assembly, monomer. Interacts with RASSF9. It depends on Zn(2+) as a cofactor. Cu(2+) serves as cofactor.

The protein localises to the cytoplasmic vesicle. Its subcellular location is the secretory vesicle membrane. It is found in the membrane. It localises to the secreted. The enzyme catalyses a [peptide]-C-terminal glycine + 2 L-ascorbate + O2 = a [peptide]-C-terminal (2S)-2-hydroxyglycine + 2 monodehydro-L-ascorbate radical + H2O. It catalyses the reaction a [peptide]-C-terminal (2S)-2-hydroxyglycine = a [peptide]-C-terminal amide + glyoxylate. The catalysed reaction is N-dodecanoylglycine + 2 L-ascorbate + O2 = N-dodecanoyl-(2S)-hydroxyglycine + 2 monodehydro-L-ascorbate radical + H2O. It carries out the reaction N-dodecanoyl-(2S)-hydroxyglycine = dodecanamide + glyoxylate. The enzyme catalyses N-(9Z,12Z,15Z)-octadecatrienoylglycine + 2 L-ascorbate + O2 = N-(9Z,12Z,15Z)-octadecatrienoyl-(2S)-hydroxyglycine + 2 monodehydro-L-ascorbate radical + H2O. It catalyses the reaction N-(9Z,12Z,15Z)-octadecatrienoyl-(2S)-hydroxyglycine = (9Z,12Z,15Z)-octadecatrienamide + glyoxylate. The catalysed reaction is N-(9Z-octadecenoyl)glycine + 2 L-ascorbate + O2 = N-(9Z-octadecenoyl)-(2S)-hydroxyglycine + 2 monodehydro-L-ascorbate radical + H2O. It carries out the reaction N-(9Z-octadecenoyl)-(2S)-hydroxyglycine = (9Z)-octadecenamide + glyoxylate. The enzyme catalyses N-tetradecanoylglycine + 2 L-ascorbate + O2 = N-tetradecanoyl-(2S)-hydroxyglycine + 2 monodehydro-L-ascorbate radical + H2O. It catalyses the reaction N-tetradecanoyl-(2S)-hydroxyglycine = tetradecamide + glyoxylate. The catalysed reaction is N-decanoylglycine + 2 L-ascorbate + O2 = N-decanoyl-(2S)-hydroxyglycine + 2 monodehydro-L-ascorbate radical + H2O. It carries out the reaction N-decanoyl-(2S)-hydroxyglycine = decanamide + glyoxylate. The enzyme catalyses N-octanoylglycine + 2 L-ascorbate + O2 = N-octanoyl-(2S)-hydroxyglycine + 2 monodehydro-L-ascorbate radical + H2O. It catalyses the reaction N-octanoyl-(2S)-hydroxyglycine = octanamide + glyoxylate. With respect to regulation, PAM activity is inhibited by EDTA, phenylglyoxal and diethyl pyrocarbonate. PAL activity is stimulated by cadmium and inhibited by mercury. Its function is as follows. Bifunctional enzyme that catalyzes amidation of the C-terminus of proteins. Alpha-amidation is present at the C-terminus of many endocrine hormones and neuropeptides and is required for their activity. C-terminal amidation also takes place in response to protein fragmentation triggered by oxidative stress, promoting degradation of amidated protein fragments by the proteasome. Alpha-amidation involves two sequential reactions, both of which are catalyzed by separate catalytic domains of the enzyme. The first step, catalyzed by peptidyl alpha-hydroxylating monooxygenase (PHM) domain, is the copper-, ascorbate-, and O2- dependent stereospecific hydroxylation (with S stereochemistry) at the alpha-carbon (C-alpha) of the C-terminal glycine of the peptidylglycine substrate. The second step, catalyzed by the peptidylglycine amidoglycolate lyase (PAL) domain, is the zinc-dependent cleavage of the N-C-alpha bond, producing the alpha-amidated peptide and glyoxylate. Similarly, catalyzes the two-step conversion of an N-fatty acylglycine to a primary fatty acid amide and glyoxylate. In Rattus norvegicus (Rat), this protein is Peptidylglycine alpha-amidating monooxygenase.